We begin with the raw amino-acid sequence, 303 residues long: Acetylglutamate kinase (303 aa).

Substrate-binding positions include 76–77 (GG), Arg-98, and Asn-192.

This sequence belongs to the acetylglutamate kinase family. ArgB subfamily.

It is found in the cytoplasm. The catalysed reaction is N-acetyl-L-glutamate + ATP = N-acetyl-L-glutamyl 5-phosphate + ADP. It functions in the pathway amino-acid biosynthesis; L-arginine biosynthesis; N(2)-acetyl-L-ornithine from L-glutamate: step 2/4. In terms of biological role, catalyzes the ATP-dependent phosphorylation of N-acetyl-L-glutamate. This is Acetylglutamate kinase from Chlorobium phaeobacteroides (strain DSM 266 / SMG 266 / 2430).